The sequence spans 310 residues: Olfactory receptor 4K14 (310 aa).

Topologically, residues 1–25 (MDPQNYSLVSEFVLHGLCTSRHLQN) are extracellular. An N-linked (GlcNAc...) asparagine glycan is attached at Asn-5. Residues 26-49 (FFFIFFFGVYVAIMLGNLLILVTV) traverse the membrane as a helical segment. Over 50–58 (ISDPCLHSS) the chain is Cytoplasmic. A helical transmembrane segment spans residues 59-80 (PMYFLLGNLAFLDMWLASFATP). The Extracellular portion of the chain corresponds to 81 to 101 (KMIRDFLSDQKLISFGGCMAQ). Cys-98 and Cys-190 are disulfide-bonded. Residues 102 to 121 (IFFLHFTGGAEMVLLVSMAY) form a helical membrane-spanning segment. Residues 122–140 (DRYVAICKPLHYMTLMSWQ) lie on the Cytoplasmic side of the membrane. The chain crosses the membrane as a helical span at residues 141–159 (TCIRLVLASWVVGFVHSIS). Topologically, residues 160–196 (QVAFTVNLPYCGPNEVDSFFCDLPLVIKLACMDTYVL) are extracellular. The chain crosses the membrane as a helical span at residues 197 to 220 (GIIMISDSGLLSLSCFLLLLISYT). Residues 221–236 (VILLAIRQRAAGSTSK) are Cytoplasmic-facing. Residues 237–259 (ALSTCSAHIMVVTLFFGPCIFVY) traverse the membrane as a helical segment. The Extracellular portion of the chain corresponds to 260 to 270 (VRPFSRFSVDK). A helical transmembrane segment spans residues 271–290 (LLSVFYTIFTPLLNPIIYTL). The Cytoplasmic segment spans residues 291 to 310 (RNEEMKAAMKKLQNRRVTFQ).

The protein belongs to the G-protein coupled receptor 1 family.

It localises to the cell membrane. Its function is as follows. Odorant receptor. The sequence is that of Olfactory receptor 4K14 (OR4K14) from Homo sapiens (Human).